Reading from the N-terminus, the 390-residue chain is Acetylornithine aminotransferase (390 aa).

Pyridoxal 5'-phosphate-binding positions include 103–104 (GT) and Phe129. Arg132 is a binding site for N(2)-acetyl-L-ornithine. 214–217 (DEVQ) contacts pyridoxal 5'-phosphate. Residue Lys243 is modified to N6-(pyridoxal phosphate)lysine. Residue Ser271 participates in N(2)-acetyl-L-ornithine binding. Thr272 lines the pyridoxal 5'-phosphate pocket. Lys304 is covalently cross-linked (Isoglutamyl lysine isopeptide (Lys-Gln) (interchain with Q-Cter in protein Pup)).

This sequence belongs to the class-III pyridoxal-phosphate-dependent aminotransferase family. ArgD subfamily. In terms of assembly, homodimer. Requires pyridoxal 5'-phosphate as cofactor.

It is found in the cytoplasm. The enzyme catalyses N(2)-acetyl-L-ornithine + 2-oxoglutarate = N-acetyl-L-glutamate 5-semialdehyde + L-glutamate. It functions in the pathway amino-acid biosynthesis; L-arginine biosynthesis; N(2)-acetyl-L-ornithine from L-glutamate: step 4/4. In Mycolicibacterium smegmatis (strain ATCC 700084 / mc(2)155) (Mycobacterium smegmatis), this protein is Acetylornithine aminotransferase.